A 765-amino-acid polypeptide reads, in one-letter code: Putative ankyrin repeat protein L371 (765 aa).

ANK repeat units follow at residues 60 to 89, 93 to 122, 132 to 161, 165 to 194, 198 to 227, 232 to 261, 265 to 295, 322 to 353, and 357 to 395; these read NGNY…RLDV, EGNS…KIIG, KGSV…NANY, DNVN…NLNA, QGST…DQNI, LDFY…NPNH, EGNT…RCRS, DGLT…NLNY, and TGNT…GKTV.

The polypeptide is Putative ankyrin repeat protein L371 (Acanthamoeba polyphaga mimivirus (APMV)).